The chain runs to 723 residues: Polyribonucleotide nucleotidyltransferase (723 aa).

Mg(2+) is bound by residues Asp-488 and Asp-494. Residues 555 to 614 (PKIITLNIKPEKIKDVIGPGGKQINAIIDETGVKIDIEQDGTVYIASQDQAMNRKAIAII) enclose the KH domain. The S1 motif domain maps to 624-692 (GEVYTGKVRR…QQGRVNLSRK (69 aa)). Residues 692-723 (KALLEKKEQPEGDKKPQAEKKFYPKTKKPESK) form a disordered region. The span at 693–723 (ALLEKKEQPEGDKKPQAEKKFYPKTKKPESK) shows a compositional bias: basic and acidic residues.

Belongs to the polyribonucleotide nucleotidyltransferase family. The cofactor is Mg(2+).

It localises to the cytoplasm. It carries out the reaction RNA(n+1) + phosphate = RNA(n) + a ribonucleoside 5'-diphosphate. Functionally, involved in mRNA degradation. Catalyzes the phosphorolysis of single-stranded polyribonucleotides processively in the 3'- to 5'-direction. This Listeria monocytogenes serovar 1/2a (strain ATCC BAA-679 / EGD-e) protein is Polyribonucleotide nucleotidyltransferase.